We begin with the raw amino-acid sequence, 1833 residues long: Proteasome activator complex subunit 4A (1833 aa).

HEAT repeat units follow at residues 460 to 504 (PEGP…LVDC) and 983 to 1022 (NFCC…NHSG). The segment at 1095–1122 (SSSPEPNPGAASEQEELEGRKREEQKNK) is disordered. Residues 1111–1122 (LEGRKREEQKNK) show a composition bias toward basic and acidic residues. 4 HEAT repeats span residues 1164 to 1202 (LPLP…QLKR), 1344 to 1382 (DAFL…GSKH), 1626 to 1664 (SDQI…YNLF), and 1670 to 1708 (AKAV…CNFL). Positions 1640–1728 (SRSSSWHARY…ESLSKTRLPK (89 aa)) are bromodomain-like (BRDL).

This sequence belongs to the BLM10 family. Homodimer. Interacts with the 20S and 26S proteasomes.

The protein resides in the cytoplasm. The protein localises to the cytosol. It is found in the nucleus. Its subcellular location is the nucleus speckle. Its function is as follows. Associated component of the proteasome that specifically recognizes acetylated histones and promotes ATP- and ubiquitin-independent degradation of core histones during DNA damage response. Recognizes and binds acetylated histones via its bromodomain-like (BRDL) region and activates the proteasome by opening the gated channel for substrate entry. Binds to the core proteasome via its C-terminus, which occupies the same binding sites as the proteasomal ATPases, opening the closed structure of the proteasome via an active gating mechanism. involved in DNA damage response in somatic cells: binds to acetylated histones and promotes degradation of histones. This Danio rerio (Zebrafish) protein is Proteasome activator complex subunit 4A (psme4a).